The following is a 553-amino-acid chain: Formate--tetrahydrofolate ligase (553 aa).

Position 63 to 70 (63 to 70) interacts with ATP; it reads TPAGEGKT.

This sequence belongs to the formate--tetrahydrofolate ligase family.

The enzyme catalyses (6S)-5,6,7,8-tetrahydrofolate + formate + ATP = (6R)-10-formyltetrahydrofolate + ADP + phosphate. It participates in one-carbon metabolism; tetrahydrofolate interconversion. This chain is Formate--tetrahydrofolate ligase, found in Oenococcus oeni (strain ATCC BAA-331 / PSU-1).